The chain runs to 225 residues: Uracil-DNA glycosylase (225 aa).

Residue D61 is the Proton acceptor of the active site.

The protein belongs to the uracil-DNA glycosylase (UDG) superfamily. UNG family.

Its subcellular location is the cytoplasm. It catalyses the reaction Hydrolyzes single-stranded DNA or mismatched double-stranded DNA and polynucleotides, releasing free uracil.. Its function is as follows. Excises uracil residues from the DNA which can arise as a result of misincorporation of dUMP residues by DNA polymerase or due to deamination of cytosine. The protein is Uracil-DNA glycosylase of Actinobacillus pleuropneumoniae serotype 5b (strain L20).